Consider the following 259-residue polypeptide: GTP cyclohydrolase FolE2 (259 aa).

The protein belongs to the GTP cyclohydrolase IV family.

The catalysed reaction is GTP + H2O = 7,8-dihydroneopterin 3'-triphosphate + formate + H(+). Its pathway is cofactor biosynthesis; 7,8-dihydroneopterin triphosphate biosynthesis; 7,8-dihydroneopterin triphosphate from GTP: step 1/1. Converts GTP to 7,8-dihydroneopterin triphosphate. In Nitratidesulfovibrio vulgaris (strain DSM 19637 / Miyazaki F) (Desulfovibrio vulgaris), this protein is GTP cyclohydrolase FolE2.